Here is a 229-residue protein sequence, read N- to C-terminus: 7-cyano-7-deazaguanine synthase (229 aa).

12-22 (LSGGMDSCVCA) contributes to the ATP binding site. Zn(2+)-binding residues include Cys194, Cys202, Cys205, and Cys208.

It belongs to the QueC family. Zn(2+) serves as cofactor.

The catalysed reaction is 7-carboxy-7-deazaguanine + NH4(+) + ATP = 7-cyano-7-deazaguanine + ADP + phosphate + H2O + H(+). The protein operates within purine metabolism; 7-cyano-7-deazaguanine biosynthesis. In terms of biological role, catalyzes the ATP-dependent conversion of 7-carboxy-7-deazaguanine (CDG) to 7-cyano-7-deazaguanine (preQ(0)). This is 7-cyano-7-deazaguanine synthase from Acidobacterium capsulatum (strain ATCC 51196 / DSM 11244 / BCRC 80197 / JCM 7670 / NBRC 15755 / NCIMB 13165 / 161).